The following is a 154-amino-acid chain: 6,7-dimethyl-8-ribityllumazine synthase (154 aa).

5-amino-6-(D-ribitylamino)uracil contacts are provided by residues Phe15, 47–49, and 71–73; these read TFD and AVI. Residue 76–77 participates in (2S)-2-hydroxy-3-oxobutyl phosphate binding; sequence ET. The Proton donor role is filled by His79. Leu104 contacts 5-amino-6-(D-ribitylamino)uracil. (2S)-2-hydroxy-3-oxobutyl phosphate is bound at residue Arg119.

The protein belongs to the DMRL synthase family.

It catalyses the reaction (2S)-2-hydroxy-3-oxobutyl phosphate + 5-amino-6-(D-ribitylamino)uracil = 6,7-dimethyl-8-(1-D-ribityl)lumazine + phosphate + 2 H2O + H(+). The protein operates within cofactor biosynthesis; riboflavin biosynthesis; riboflavin from 2-hydroxy-3-oxobutyl phosphate and 5-amino-6-(D-ribitylamino)uracil: step 1/2. Its function is as follows. Catalyzes the formation of 6,7-dimethyl-8-ribityllumazine by condensation of 5-amino-6-(D-ribitylamino)uracil with 3,4-dihydroxy-2-butanone 4-phosphate. This is the penultimate step in the biosynthesis of riboflavin. The sequence is that of 6,7-dimethyl-8-ribityllumazine synthase from Saccharolobus solfataricus (strain ATCC 35092 / DSM 1617 / JCM 11322 / P2) (Sulfolobus solfataricus).